The chain runs to 197 residues: Casparian strip membrane protein 3 (197 aa).

Topologically, residues 1-35 (MSARVDIPADTSAAAKGTAPLIAASTHVKGGYKKG) are cytoplasmic. Residues 36-56 (LAIFDLVLRLGAVVTALAAAA) form a helical membrane-spanning segment. The Extracellular segment spans residues 57–85 (TMGTTDQTLPFFTQFFQFQASYDDLPTFQ). A helical membrane pass occupies residues 86–106 (FFVIAMAIVSGYLVLSLPFSI). Residues 107–119 (VAIIRPHATGPRL) lie on the Cytoplasmic side of the membrane. The chain crosses the membrane as a helical span at residues 120–140 (LLIILDTVALTLNTAAAAAAV). The Extracellular segment spans residues 141 to 171 (AIVDLAQNGNSSANWLGICQQFGDFCQKASG). N-linked (GlcNAc...) asparagine glycosylation is present at asparagine 150. A helical transmembrane segment spans residues 172-192 (AVVASFIAAGVLLFLIVISAL). Residues 193–197 (ALRKR) are Cytoplasmic-facing.

Belongs to the Casparian strip membrane proteins (CASP) family. As to quaternary structure, homodimer and heterodimers.

The protein localises to the cell membrane. Functionally, regulates membrane-cell wall junctions and localized cell wall deposition. Required for establishment of the Casparian strip membrane domain (CSD) and the subsequent formation of Casparian strips, a cell wall modification of the root endodermis that determines an apoplastic barrier between the intraorganismal apoplasm and the extraorganismal apoplasm and prevents lateral diffusion. This chain is Casparian strip membrane protein 3, found in Populus trichocarpa (Western balsam poplar).